Here is an 84-residue protein sequence, read N- to C-terminus: uncharacterized protein (84 aa).

The chain crosses the membrane as a helical span at residues 10–32 (AFSLAYYIIIHLLCLSYIYEIIH).

The protein localises to the membrane. This is an uncharacterized protein from Saccharomyces cerevisiae (strain ATCC 204508 / S288c) (Baker's yeast).